A 1265-amino-acid chain; its full sequence is MSEKNLKVGARVELTGKDLLGTVAYVGMTSFAVGKWVGVVLDEPKGKNSGSIKGQQYFQCDENCGMFVRPTQLRLLEAAPGSRRSIEDVSGATPTAAQPTKARLSSSRTSLSSSRQSLLGSRTQLTTSLSERTASSSSIGPRKSLAPQNSKDKESPSTSLAEGAPAASGGNGAASHASSKRASFVETGFLEILKPQFTPSQPLRSPSFTMPSNSGAEDKVALLEAQKTSAELQAQLADLTEKLETLKQRRNEDKERLREFDKMKIQFEQLQEFRTKIMGAQASLQKELLRAKQEAKDAIEAKEQHAQEMADLADNVEMITLDKEMAEEKADTLQLELESSKERIEELEVDLELLRSEMQNKAESAIGNISGGGDSPGLSTYEFKQLEQQNIRLKETLVRLRDLSAHDKHDIQKLSKELEMKRSEVTELERTKEKLSAKIDELEAIVADLQEQVDAALGAEEMVEQLAEKKMELEDKVKLLEEEIAQLEALEEVHEQLVESNHELELDLREELDLANGAKKEVLRERDAAIETIYDRDQTIVKFRELVQKLNDQLTELRDRNSSNEKESLQDPSLKMVTETIDYKQMFAESKAYTRAIDVQLRQIELSQANEHVQMLTAFMPESFMSRGGDHDSILVILLISRIVFKCDIVVSQTRERFPPVDAITREAVTQGHAVQQYAFKCRLLHYVHSLQCALHQILYGLNSCQPDTLLRAGSSLPEMVAQEKIVDGIIELLKSNQLDENSTTDNIEKCVAFFNAMNSVLLAGEQLLNEIQMIRDCVASLGAACESILSDTAIAKVIIQEAGATSDSVLLIQFLNENMESVRQQVKLIKRRLPSDQHVIKSGLSQHKVEAMRGLAQNISRIMSAMHQATKQSLAAIVSTIESDNAAEHTLPQEKYWALLTASCERIYEQDDRGPTQNFKTLLAQANSDLQLIAQHLLDKEYDIISAANNASNQQKSGAHSTPITQRAQLIKKQLEQKNVLAATLENREADVKQLKVAAKMKQNELSEMQIRKDLAEKKLSVLQNEYEHAVDKWKQKYEETSLQLQLKEKEFEETMDHLQSDIDALESEKSDLRDKLKLNSTTGKVQPGSESHSPHNISLSGNTSTAPGISNVSYSAPAGTAPVVAEEVELLKNAFNQERNQRLRLQAQDMRAKLSQFEPLHVPQPQDQRITALESELTRMKHAWVLSLLQVRSQDSVNSGTRIDAVALQRRNQPVPLKGEISSKASQLASDILTEYLQRKPHRATHGQFASFPTVDVKRVLQI.

The CAP-Gly domain maps to G27–R69. The interval G81–S179 is disordered. Residues S85, S110, S114, S117, and S121 each carry the phosphoserine modification. Composition is skewed to low complexity over residues R103 to S138 and A161 to A177. The residue at position 183 (S183) is a Phosphoserine. Coiled-coil stretches lie at residues N213 to Q570, L812 to S836, and Q967 to T1084. The interval S1082 to S1106 is disordered. S1117 carries the phosphoserine modification. The stretch at E1128–E1160 forms a coiled coil.

This sequence belongs to the dynactin 150 kDa subunit family. As to quaternary structure, monomer and homodimer. Subunit of dynactin, a multiprotein complex part of a tripartite complex with dynein and a adapter, such as BICDL1, BICD2 or HOOK3. The dynactin complex is built around ACTR1A/ACTB filament and consists of an actin-related filament composed of a shoulder domain, a pointed end and a barbed end. Its length is defined by its flexible shoulder domain. The soulder is composed of 2 DCTN1 subunits, 4 DCTN2 and 2 DCTN3. DCTN1/p150(glued) binds directly to microtubules and to cytoplasmic dynein.

It is found in the cytoplasm. The protein resides in the cytoskeleton. In terms of biological role, part of the dynactin complex that activates the molecular motor dynein for ultra-processive transport along microtubules. Plays a key role in dynein-mediated retrograde transport of vesicles and organelles along microtubules by recruiting and tethering dynein to microtubules. Binds to both dynein and microtubules providing a link between specific cargos, microtubules and dynein. Essential for targeting dynein to microtubule plus ends, recruiting dynein to membranous cargos and enhancing dynein processivity (the ability to move along a microtubule for a long distance without falling off the track). Can also act as a brake to slow the dynein motor during motility along the microtubule. Can regulate microtubule stability by promoting microtubule formation, nucleation and polymerization and by inhibiting microtubule catastrophe in neurons. Inhibits microtubule catastrophe by binding both to microtubules and to tubulin, leading to enhanced microtubule stability along the axon. Plays a role in metaphase spindle orientation. Plays a role in centriole cohesion and subdistal appendage organization and function. Its recruitment to the centriole in a KIF3A-dependent manner is essential for the maintenance of centriole cohesion and the formation of subdistal appendage. Also required for microtubule anchoring at the mother centriole. Plays a role in primary cilia formation. This Drosophila melanogaster (Fruit fly) protein is Dynactin subunit 1.